We begin with the raw amino-acid sequence, 1016 residues long: Coiled-coil domain-containing protein 57 (1016 aa).

Residues 1-503 (MLPLCSEREL…HGLLPGQEAQ (503 aa)) form a centrosomal targeting domain region. 3 coiled-coil regions span residues 14–607 (LARK…PVKT), 676–700 (SEVD…KHLK), and 748–775 (VTHL…LLEM). Disordered stretches follow at residues 500–519 (QEAQ…DSPS) and 549–573 (HLPP…DSTP). Residues 604–1016 (PVKTSVATAD…SRIRNYNLKD (413 aa)) are microtubule binding domain. Disordered stretches follow at residues 781-921 (AEQG…LASS) and 933-1016 (GSSP…NLKD). 2 stretches are compositionally biased toward polar residues: residues 846 to 859 (QPHS…TNTP) and 934 to 945 (SSPSGVPSQDNS).

Interacts with CEP63; the interaction is required for their location to proximal end of centrioles. Interacts with microtubules.

The protein resides in the cytoplasm. The protein localises to the cytoskeleton. It localises to the microtubule organizing center. Its subcellular location is the centrosome. It is found in the centriolar satellite. The protein resides in the centriole. The protein localises to the spindle. Pleiotropic regulator of centriole duplication, mitosis, and ciliogenesis. Critical interface between centrosome and microtubule-mediated cellular processes. Centriole duplication protein required for recruitment of CEP63, CEP152, and PLK4 to the centrosome. Independent of its centrosomal targeting, localizes to and interacts with microtubules and regulates microtubule nucleation, stability, and mitotic progression. This Mus musculus (Mouse) protein is Coiled-coil domain-containing protein 57.